Reading from the N-terminus, the 467-residue chain is Light-independent protochlorophyllide reductase subunit N (467 aa).

Residues Cys-23, Cys-48, and Cys-108 each contribute to the [4Fe-4S] cluster site.

It belongs to the BchN/ChlN family. In terms of assembly, protochlorophyllide reductase is composed of three subunits; ChlL, ChlN and ChlB. Forms a heterotetramer of two ChlB and two ChlN subunits. It depends on [4Fe-4S] cluster as a cofactor.

The catalysed reaction is chlorophyllide a + oxidized 2[4Fe-4S]-[ferredoxin] + 2 ADP + 2 phosphate = protochlorophyllide a + reduced 2[4Fe-4S]-[ferredoxin] + 2 ATP + 2 H2O. The protein operates within porphyrin-containing compound metabolism; chlorophyll biosynthesis (light-independent). Its function is as follows. Component of the dark-operative protochlorophyllide reductase (DPOR) that uses Mg-ATP and reduced ferredoxin to reduce ring D of protochlorophyllide (Pchlide) to form chlorophyllide a (Chlide). This reaction is light-independent. The NB-protein (ChlN-ChlB) is the catalytic component of the complex. The protein is Light-independent protochlorophyllide reductase subunit N of Trichormus variabilis (strain ATCC 29413 / PCC 7937) (Anabaena variabilis).